The following is a 214-amino-acid chain: Charged multivesicular body protein 2b-A (214 aa).

A coiled-coil region spans residues 25 to 55 (QRAITRDRTALEKQEKQLEMEIKKMAKAGNK). The tract at residues 178 to 214 (MAKAPSAAKGLPSASASKSTGISDEEIERQLKALGVD) is disordered. The MIT-interacting motif motif lies at 202–212 (EEIERQLKALG).

It belongs to the SNF7 family. As to quaternary structure, probable core component of the endosomal sorting required for transport complex III (ESCRT-III). ESCRT-III components are thought to multimerize to form a flat lattice on the perimeter membrane of the endosome.

It localises to the cytoplasm. The protein localises to the cytosol. The protein resides in the late endosome membrane. In terms of biological role, probable core component of the endosomal sorting required for transport complex III (ESCRT-III) which is involved in multivesicular bodies (MVBs) formation and sorting of endosomal cargo proteins into MVBs. MVBs contain intraluminal vesicles (ILVs) that are generated by invagination and scission from the limiting membrane of the endosome and mostly are delivered to lysosomes enabling degradation of membrane proteins, such as stimulated growth factor receptors, lysosomal enzymes and lipids. This is Charged multivesicular body protein 2b-A (chmp2b-a) from Xenopus laevis (African clawed frog).